We begin with the raw amino-acid sequence, 205 residues long: Small ribosomal subunit protein uS4 (205 aa).

The tract at residues 1-46 is disordered; sequence MSKRHSAKYKIDRRMGENLWGRPKSPVNSRSYGPGQHGQRRKSKVS. Positions 94-154 constitute an S4 RNA-binding domain; it reads SRLDAIVYRA…EKSRNMALVL (61 aa).

Belongs to the universal ribosomal protein uS4 family. In terms of assembly, part of the 30S ribosomal subunit. Contacts protein S5. The interaction surface between S4 and S5 is involved in control of translational fidelity.

One of the primary rRNA binding proteins, it binds directly to 16S rRNA where it nucleates assembly of the body of the 30S subunit. In terms of biological role, with S5 and S12 plays an important role in translational accuracy. The sequence is that of Small ribosomal subunit protein uS4 from Caulobacter vibrioides (strain ATCC 19089 / CIP 103742 / CB 15) (Caulobacter crescentus).